Reading from the N-terminus, the 243-residue chain is UPF0758 protein alr2351 (243 aa).

The 123-residue stretch at 113–235 (PIDSPVAAVA…HQSLREITTL (123 aa)) folds into the MPN domain. Residues His184, His186, and Asp197 each contribute to the Zn(2+) site. Residues 184–197 (HNHPSGNVEPSPED) carry the JAMM motif motif.

The protein belongs to the UPF0758 family.

The protein is UPF0758 protein alr2351 of Nostoc sp. (strain PCC 7120 / SAG 25.82 / UTEX 2576).